A 220-amino-acid polypeptide reads, in one-letter code: UPF0758 protein ASA_4229 (220 aa).

An MPN domain is found at 95–220; the sequence is EQLQRGDALT…TVSFAERGWL (126 aa). 3 residues coordinate Zn(2+): H169, H171, and D182. A JAMM motif motif is present at residues 169-182; the sequence is HNHPSGVAEPSRAD.

It belongs to the UPF0758 family.

The protein is UPF0758 protein ASA_4229 of Aeromonas salmonicida (strain A449).